The sequence spans 315 residues: Probable cell division protein WhiA (315 aa).

A DNA-binding region (H-T-H motif) is located at residues 278–312 (SLSDLAGMIEGQELTKSGINHRMRKLMQIVKELNH).

It belongs to the WhiA family.

In terms of biological role, involved in cell division and chromosome segregation. In Oenococcus oeni (strain ATCC BAA-331 / PSU-1), this protein is Probable cell division protein WhiA.